The following is a 325-amino-acid chain: Homeobox protein Hox-A1a (325 aa).

The Antp-type hexapeptide motif lies at 187–192; it reads TFDWMK. Disordered regions lie at residues 194–215 and 264–325; these read KRNP…PNTV and RMKQ…YPSN. The segment at residues 212 to 271 is a DNA-binding region (homeobox); that stretch reads PNTVRTNFTTKQLTELEKEFHFNKYLTRARRVEIAAALQLNETQVKIWFQNRRMKQKKRE. A compositionally biased stretch (basic and acidic residues) spans 285–300; the sequence is SGERNQEKVEDGESEK. A compositionally biased stretch (low complexity) spans 301–317; sequence SVSAPSTPSPTSSTVSS.

The protein belongs to the Antp homeobox family. Labial subfamily.

It localises to the nucleus. Functionally, sequence-specific transcription factor which is part of a developmental regulatory system that provides cells with specific positional identities on the anterior-posterior axis. In Takifugu rubripes (Japanese pufferfish), this protein is Homeobox protein Hox-A1a (hoxa1a).